An 83-amino-acid chain; its full sequence is Retinal cone rhodopsin-sensitive cGMP 3',5'-cyclic phosphodiesterase subunit gamma (83 aa).

The interval 1–51 is disordered; it reads MSDSPCLSPPAPSQGPTTPRKGPPKFKQRQTRQFKSKPPKKGVKGFGDDIP. Basic residues predominate over residues 22–43; that stretch reads GPPKFKQRQTRQFKSKPPKKGV.

It belongs to the rod/cone cGMP-PDE gamma subunit family. In terms of assembly, tetramer composed of two catalytic chains (alpha and beta), and two inhibitory chains (gamma).

The catalysed reaction is 3',5'-cyclic GMP + H2O = GMP + H(+). In terms of biological role, participates in processes of transmission and amplification of the visual signal. cGMP-PDEs are the effector molecules in G-protein-mediated phototransduction in vertebrate rods and cones. This Rattus norvegicus (Rat) protein is Retinal cone rhodopsin-sensitive cGMP 3',5'-cyclic phosphodiesterase subunit gamma (Pde6h).